Here is a 905-residue protein sequence, read N- to C-terminus: Protein translocase subunit SecA (905 aa).

ATP contacts are provided by residues Gln-89, 107 to 111 (GEGKT), and Asp-502. The disordered stretch occupies residues 837-885 (EQTDVGDPILNDQNKKNSSTLWTPSQENKFVNPKDRNPSDSTTWGKVGR). The segment covering 852-865 (KNSSTLWTPSQENK) has biased composition (polar residues). Residues Cys-889, Cys-891, Cys-900, and His-901 each contribute to the Zn(2+) site.

This sequence belongs to the SecA family. In terms of assembly, monomer and homodimer. Part of the essential Sec protein translocation apparatus which comprises SecA, SecYEG and auxiliary proteins SecDF-YajC and YidC. The cofactor is Zn(2+).

Its subcellular location is the cell inner membrane. It is found in the cytoplasm. It carries out the reaction ATP + H2O + cellular proteinSide 1 = ADP + phosphate + cellular proteinSide 2.. In terms of biological role, part of the Sec protein translocase complex. Interacts with the SecYEG preprotein conducting channel. Has a central role in coupling the hydrolysis of ATP to the transfer of proteins into and across the cell membrane, serving both as a receptor for the preprotein-SecB complex and as an ATP-driven molecular motor driving the stepwise translocation of polypeptide chains across the membrane. The chain is Protein translocase subunit SecA from Bartonella henselae (strain ATCC 49882 / DSM 28221 / CCUG 30454 / Houston 1) (Rochalimaea henselae).